A 504-amino-acid polypeptide reads, in one-letter code: Maturase K (504 aa).

The protein belongs to the intron maturase 2 family. MatK subfamily.

The protein localises to the plastid. It is found in the chloroplast. In terms of biological role, usually encoded in the trnK tRNA gene intron. Probably assists in splicing its own and other chloroplast group II introns. This chain is Maturase K, found in Gossypium gossypioides (Mexican cotton).